The following is a 271-amino-acid chain: L-aspartate dehydrogenase (271 aa).

NAD(+) contacts are provided by A124 and N192. The active site involves H222.

It belongs to the L-aspartate dehydrogenase family.

It carries out the reaction L-aspartate + NADP(+) + H2O = oxaloacetate + NH4(+) + NADPH + H(+). The catalysed reaction is L-aspartate + NAD(+) + H2O = oxaloacetate + NH4(+) + NADH + H(+). The protein operates within cofactor biosynthesis; NAD(+) biosynthesis; iminoaspartate from L-aspartate (dehydrogenase route): step 1/1. Specifically catalyzes the NAD or NADP-dependent dehydrogenation of L-aspartate to iminoaspartate. The polypeptide is L-aspartate dehydrogenase (Methanococcoides burtonii (strain DSM 6242 / NBRC 107633 / OCM 468 / ACE-M)).